A 191-amino-acid chain; its full sequence is UPF0312 protein Shewana3_1179 (191 aa).

An N-terminal signal peptide occupies residues 1–22; it reads MKKQLLAALIGGSLLAPMAASA.

The protein belongs to the UPF0312 family. Type 1 subfamily.

The protein localises to the periplasm. This chain is UPF0312 protein Shewana3_1179, found in Shewanella sp. (strain ANA-3).